A 202-amino-acid chain; its full sequence is Nucleoside triphosphate pyrophosphatase (202 aa).

Catalysis depends on D79, which acts as the Proton acceptor.

This sequence belongs to the Maf family. A divalent metal cation serves as cofactor.

It localises to the cytoplasm. It carries out the reaction a ribonucleoside 5'-triphosphate + H2O = a ribonucleoside 5'-phosphate + diphosphate + H(+). The catalysed reaction is a 2'-deoxyribonucleoside 5'-triphosphate + H2O = a 2'-deoxyribonucleoside 5'-phosphate + diphosphate + H(+). Its function is as follows. Nucleoside triphosphate pyrophosphatase. May have a dual role in cell division arrest and in preventing the incorporation of modified nucleotides into cellular nucleic acids. This Rhodopseudomonas palustris (strain BisB18) protein is Nucleoside triphosphate pyrophosphatase.